We begin with the raw amino-acid sequence, 526 residues long: Genetic interactor of prohibitins 3, mitochondrial (526 aa).

The N-terminal 14 residues, 1-14, are a transit peptide targeting the mitochondrion; that stretch reads MRFRRYFSSTFKRL. The CP-type G domain occupies 105 to 293; the sequence is FEEVEKQIPL…IYDLPGYSNY (189 aa).

This sequence belongs to the TRAFAC class YlqF/YawG GTPase family. GEP3 subfamily.

Its subcellular location is the mitochondrion. Functionally, may be involved in the mitochondrial lipid metabolism. The polypeptide is Genetic interactor of prohibitins 3, mitochondrial (GEP3) (Candida glabrata (strain ATCC 2001 / BCRC 20586 / JCM 3761 / NBRC 0622 / NRRL Y-65 / CBS 138) (Yeast)).